The following is a 179-amino-acid chain: Large ribosomal subunit protein uL5 (179 aa).

The residue at position 3 (Lys3) is an N6-acetyllysine.

Belongs to the universal ribosomal protein uL5 family. As to quaternary structure, part of the 50S ribosomal subunit; part of the 5S rRNA/L5/L18/L25 subcomplex. Contacts the 5S rRNA and the P site tRNA. Forms a bridge to the 30S subunit in the 70S ribosome.

In terms of biological role, this is one of the proteins that bind and probably mediate the attachment of the 5S RNA into the large ribosomal subunit, where it forms part of the central protuberance. In the 70S ribosome it contacts protein S13 of the 30S subunit (bridge B1b), connecting the 2 subunits; this bridge is implicated in subunit movement. Contacts the P site tRNA; the 5S rRNA and some of its associated proteins might help stabilize positioning of ribosome-bound tRNAs. The polypeptide is Large ribosomal subunit protein uL5 (Shigella flexneri).